The sequence spans 387 residues: Ubiquitin-conjugating enzyme E2 25 (387 aa).

The tract at residues Ala117–Asp164 is disordered. Residues Val120 to Asp131 show a composition bias toward basic and acidic residues. A compositionally biased stretch (acidic residues) spans Pro139–Asp164. Positions Thr214–Tyr380 constitute a UBC core domain. The active-site Glycyl thioester intermediate is the Cys315.

This sequence belongs to the ubiquitin-conjugating enzyme family. In terms of tissue distribution, in the embryo, expressed in precursor neuron and muscle cells and in other cells such as hypodermal cells. After hatching of L1 larvae and in all subsequent stages, strongest expression in pharyngeal muscle and anal muscle cells. In L4 larvae and adolescent hermaphrodites, also expressed in the vulval muscles. Expression also detected in all four nerve cords and in neurons with weaker levels in all body wall muscles.

The protein resides in the cytoplasm. It is found in the nucleus. The catalysed reaction is S-ubiquitinyl-[E1 ubiquitin-activating enzyme]-L-cysteine + [E2 ubiquitin-conjugating enzyme]-L-cysteine = [E1 ubiquitin-activating enzyme]-L-cysteine + S-ubiquitinyl-[E2 ubiquitin-conjugating enzyme]-L-cysteine.. It participates in protein modification; protein ubiquitination. In terms of biological role, catalyzes the covalent attachment of ubiquitin to other proteins (Potential). Required for the maintenance of neuromuscular function. This is Ubiquitin-conjugating enzyme E2 25 from Caenorhabditis elegans.